Consider the following 115-residue polypeptide: Vitelline membrane protein Vm32E (115 aa).

The N-terminal stretch at 1-17 (MKIVAFTLVAFVALAGA) is a signal peptide. Positions 35 to 72 (GYPAPPCPTNYLFSCQPNLAPAPCAQEAPAYGSAGAYT) constitute a VM domain.

It belongs to the vitelline membrane family.

Its subcellular location is the secreted. Functionally, major early eggshell protein. The sequence is that of Vitelline membrane protein Vm32E from Drosophila yakuba (Fruit fly).